The chain runs to 167 residues: Sulfopyruvate decarboxylase subunit alpha (167 aa).

This sequence belongs to the ComD family. As to quaternary structure, heterododecamer composed of 6 subunits alpha and 6 subunits beta.

The catalysed reaction is 3-sulfopyruvate + H(+) = sulfoacetaldehyde + CO2. Its pathway is cofactor biosynthesis; coenzyme M biosynthesis; sulfoacetaldehyde from phosphoenolpyruvate and sulfite: step 4/4. Functionally, involved in the biosynthesis of the coenzyme M (2-mercaptoethanesulfonic acid). Catalyzes the decarboxylation of sulfopyruvate to sulfoacetaldehyde. This is Sulfopyruvate decarboxylase subunit alpha (comD) from Methanococcus maripaludis (strain DSM 14266 / JCM 13030 / NBRC 101832 / S2 / LL).